A 1807-amino-acid polypeptide reads, in one-letter code: Nucleoporin nup189 (1807 aa).

The interval 1 to 118 (MFGQNNSSGF…SGGGLFGSNT (118 aa)) is disordered. GLFG repeat units lie at residues 26–29 (GLFG) and 66–69 (GLFG). Over residues 29 to 61 (GSNSNTPGNTLFGSQNTSTTGFGQNTTQPLFGS) the composition is skewed to polar residues. Low complexity predominate over residues 62–77 (NTNGGLFGNRNNTTTT). Gly residues predominate over residues 78–90 (GGTGFGMSSGTGM). Residues 93 to 108 (QSNTPAFGGTNNATNP) show a composition bias toward polar residues. 10 GLFG repeats span residues 112-115 (GLFG), 152-155 (GLFG), 177-180 (GLFG), 308-311 (GLFG), 335-338 (GLFG), 350-353 (GLFG), 381-384 (GLFG), 399-402 (GLFG), 435-438 (GLFG), and 521-524 (GLFG). Over residues 565 to 584 (PGTGLFGSTQTNNATSNTGT) the composition is skewed to polar residues. Residues 565–685 (PGTGLFGSTQ…SSTTSQVAPT (121 aa)) form a disordered region. GLFG repeat units follow at residues 585–588 (GLFG), 611–614 (GLFG), 627–630 (GLFG), and 646–649 (GLFG). Residues 588–600 (GSNNANTTNTGGS) show a composition bias toward low complexity. Over residues 603–644 (NKPSTTTGGLFGNTTAQQPSTTTSGLFGASNTNNQAQTSNFG) the composition is skewed to polar residues. The segment covering 653 to 663 (AGQQQQPLQAS) has biased composition (low complexity). Positions 664 to 685 (IDQNPYGNNPLFSSTTSQVAPT) are enriched in polar residues. The residue at position 724 (Ser-724) is a Phosphoserine. The disordered stretch occupies residues 785 to 814 (QNGVKNGNDAKSDSKVQEKAPQNEADGSLK). Basic and acidic residues predominate over residues 792–802 (NDAKSDSKVQE). The Peptidase S59 domain maps to 822–963 (SDDYWMKPSI…GKWIFKVQHF (142 aa)). Residues 974–1020 (EENDMSSTSNEAGNLKKYDQPNLKVSGKNDSFVTHHTPGAFPNDSKN) are disordered. Ser-1051 carries the phosphoserine modification. Positions 1082 to 1104 (KENNVPLSEDDLSNSSESSNESV) are disordered. Positions 1094-1104 (SNSSESSNESV) are enriched in low complexity.

This sequence belongs to the nucleoporin GLFG family. As to quaternary structure, interacts (via G-L-F-G repeats) with rpn15/dss1. Interacts with raf1. Interacts with ned1. In terms of processing, nup189 is autocatalytically cleaved in nup98 and nup96.

It is found in the nucleus. Its subcellular location is the nuclear pore complex. Functionally, functions as a component of the nuclear pore complex (NPC). NPC components, collectively referred to as nucleoporins (NUPs), can play the role of both NPC structural components and of docking or interaction partners for transiently associated nuclear transport factors. Active directional transport is assured by both, a Phe-Gly (FG) repeat affinity gradient for these transport factors across the NPC and a transport cofactor concentration gradient across the nuclear envelope. Nup189 is autocatalytically cleaved in vivo in 2 polypeptides which assume different functions in the NPC. Nup98 as one of the FG repeat nucleoporins participates in karyopherin interactions and contains part of the autocatalytic cleavage activity. Nup96 as part of the NUP84 complex is involved in nuclear poly(A)+ RNA and tRNA export. This is Nucleoporin nup189 (nup189) from Schizosaccharomyces pombe (strain 972 / ATCC 24843) (Fission yeast).